The sequence spans 150 residues: Ribonuclease H (150 aa).

One can recognise an RNase H type-1 domain in the interval 1 to 146; sequence MPELFAYTDG…ADELARAGMA (146 aa). 4 residues coordinate Mg(2+): Asp-9, Glu-52, Asp-74, and Asp-138.

It belongs to the RNase H family. As to quaternary structure, monomer. Mg(2+) is required as a cofactor.

It is found in the cytoplasm. The catalysed reaction is Endonucleolytic cleavage to 5'-phosphomonoester.. Its function is as follows. Endonuclease that specifically degrades the RNA of RNA-DNA hybrids. The chain is Ribonuclease H from Roseobacter denitrificans (strain ATCC 33942 / OCh 114) (Erythrobacter sp. (strain OCh 114)).